Reading from the N-terminus, the 358-residue chain is Peptide chain release factor 1 (358 aa).

N5-methylglutamine is present on Q234.

It belongs to the prokaryotic/mitochondrial release factor family. In terms of processing, methylated by PrmC. Methylation increases the termination efficiency of RF1.

It is found in the cytoplasm. Functionally, peptide chain release factor 1 directs the termination of translation in response to the peptide chain termination codons UAG and UAA. This chain is Peptide chain release factor 1, found in Chloroherpeton thalassium (strain ATCC 35110 / GB-78).